The sequence spans 205 residues: Recombination protein RecR (205 aa).

A C4-type zinc finger spans residues 60-75; that stretch reads CKVCHNISDTETCRIC. The region spanning 83–178 is the Toprim domain; it reads STICVVESIR…KLSVIARGIS (96 aa).

This sequence belongs to the RecR family.

May play a role in DNA repair. It seems to be involved in an RecBC-independent recombinational process of DNA repair. It may act with RecF and RecO. This is Recombination protein RecR from Phocaeicola vulgatus (strain ATCC 8482 / DSM 1447 / JCM 5826 / CCUG 4940 / NBRC 14291 / NCTC 11154) (Bacteroides vulgatus).